A 251-amino-acid chain; its full sequence is Hydroxyacylglutathione hydrolase (251 aa).

Residues His-53, His-55, Asp-57, His-58, His-110, Asp-127, and His-165 each coordinate Zn(2+).

This sequence belongs to the metallo-beta-lactamase superfamily. Glyoxalase II family. Monomer. Zn(2+) is required as a cofactor.

It carries out the reaction an S-(2-hydroxyacyl)glutathione + H2O = a 2-hydroxy carboxylate + glutathione + H(+). The protein operates within secondary metabolite metabolism; methylglyoxal degradation; (R)-lactate from methylglyoxal: step 2/2. Functionally, thiolesterase that catalyzes the hydrolysis of S-D-lactoyl-glutathione to form glutathione and D-lactic acid. This chain is Hydroxyacylglutathione hydrolase, found in Escherichia fergusonii (strain ATCC 35469 / DSM 13698 / CCUG 18766 / IAM 14443 / JCM 21226 / LMG 7866 / NBRC 102419 / NCTC 12128 / CDC 0568-73).